We begin with the raw amino-acid sequence, 339 residues long: Chromo domain-containing protein cec-3 (339 aa).

The disordered stretch occupies residues 1–21 (MSNEGSREESREPEAREGKSD). A Chromo domain is found at 24–84 (FEVEKILAHK…KLKVTDKTEL (61 aa)). The segment covering 91 to 105 (QIKKNKSQKSKKRSK) has biased composition (basic residues). Disordered stretches follow at residues 91–199 (QIKK…APLS) and 215–272 (EEKA…QRTL). Composition is skewed to basic and acidic residues over residues 106-117 (TVSDHESNHDSD) and 171-183 (AAME…RNWL). A compositionally biased stretch (acidic residues) spans 184 to 193 (DEESSDDEAE). Basic and acidic residues predominate over residues 230–241 (KPREVVIKKDPS). Residues 242-251 (ESPVASASSV) are compositionally biased toward low complexity.

In terms of tissue distribution, expressed in every cell of the embryo (at protein level). In adults, expressed predominantly in the head region and the germline.

The protein localises to the chromosome. It is found in the nucleus. In terms of biological role, specifically recognizes and binds methylated 'Lys-9' of histone H3 (H3K9me), with highest preference for trimethylated 'Lys-9' (H3K9me3) followed by dimethylated 'Lys-9' (H3K9me2) followed by monomethylated 'Lys-9' (H3K9me1). Plays a role in maintaining correct unc-4 expression in the VC motor neurons where unc-4 is expressed in the vulval but not in the non-vulval VC neurons. The chain is Chromo domain-containing protein cec-3 (cec-3) from Caenorhabditis elegans.